A 162-amino-acid polypeptide reads, in one-letter code: Cyclic pyranopterin monophosphate synthase (162 aa).

Substrate-binding positions include 75-77 (LCH) and 113-114 (ME). Residue aspartate 128 is part of the active site.

Belongs to the MoaC family. Homohexamer; trimer of dimers.

The catalysed reaction is (8S)-3',8-cyclo-7,8-dihydroguanosine 5'-triphosphate = cyclic pyranopterin phosphate + diphosphate. The protein operates within cofactor biosynthesis; molybdopterin biosynthesis. Its function is as follows. Catalyzes the conversion of (8S)-3',8-cyclo-7,8-dihydroguanosine 5'-triphosphate to cyclic pyranopterin monophosphate (cPMP). The polypeptide is Cyclic pyranopterin monophosphate synthase (Burkholderia orbicola (strain MC0-3)).